A 704-amino-acid chain; its full sequence is Glycine--tRNA ligase beta subunit (704 aa).

This sequence belongs to the class-II aminoacyl-tRNA synthetase family. In terms of assembly, tetramer of two alpha and two beta subunits.

It is found in the cytoplasm. It catalyses the reaction tRNA(Gly) + glycine + ATP = glycyl-tRNA(Gly) + AMP + diphosphate. The polypeptide is Glycine--tRNA ligase beta subunit (Rhizobium etli (strain ATCC 51251 / DSM 11541 / JCM 21823 / NBRC 15573 / CFN 42)).